The primary structure comprises 242 residues: Probable septum site-determining protein MinC (242 aa).

Belongs to the MinC family. As to quaternary structure, interacts with MinD and FtsZ.

Its function is as follows. Cell division inhibitor that blocks the formation of polar Z ring septums. Rapidly oscillates between the poles of the cell to destabilize FtsZ filaments that have formed before they mature into polar Z rings. Prevents FtsZ polymerization. In Thioalkalivibrio sulfidiphilus (strain HL-EbGR7), this protein is Probable septum site-determining protein MinC.